We begin with the raw amino-acid sequence, 120 residues long: U13-lycotoxin-Ls1d (120 aa).

The N-terminal stretch at 1 to 16 (MKILFVLISILYAVYC) is a signal peptide. A propeptide spanning residues 17 to 54 (FSSEEDVDSAYLANELEPVEDINSEQYAALEPKEEQER) is cleaved from the precursor. 4 disulfide bridges follow: Cys56–Cys70, Cys63–Cys76, Cys69–Cys87, and Cys78–Cys85. Residues 56–95 (CADMGQDCKDDCDCCLNIATCNCRFGRYFCSCTFGDYQTC) form the Agouti domain.

The protein belongs to the neurotoxin 05 (agouti) family. Contains 6 disulfide bonds. In terms of tissue distribution, expressed by the venom gland.

The protein localises to the secreted. In Lycosa singoriensis (Wolf spider), this protein is U13-lycotoxin-Ls1d.